The following is a 403-amino-acid chain: Argininosuccinate synthase (403 aa).

9–17 provides a ligand contact to ATP; it reads AYSGGLDTS. L-citrulline is bound at residue Tyr86. Gly116 serves as a coordination point for ATP. Residues Thr118, Asn122, and Asp123 each contribute to the L-aspartate site. Asn122 lines the L-citrulline pocket. Residues Arg126, Ser174, Ser183, Glu259, and Tyr271 each contribute to the L-citrulline site.

Belongs to the argininosuccinate synthase family. Type 1 subfamily. In terms of assembly, homotetramer.

It is found in the cytoplasm. It catalyses the reaction L-citrulline + L-aspartate + ATP = 2-(N(omega)-L-arginino)succinate + AMP + diphosphate + H(+). It participates in amino-acid biosynthesis; L-arginine biosynthesis; L-arginine from L-ornithine and carbamoyl phosphate: step 2/3. In Shouchella clausii (strain KSM-K16) (Alkalihalobacillus clausii), this protein is Argininosuccinate synthase.